The sequence spans 357 residues: Glutamine synthetase root isozyme 1 (357 aa).

Residues 19–99 (IIAEYIWIGG…VMCDCYTPQG (81 aa)) form the GS beta-grasp domain. Positions 106 to 357 (KRYSAAKVFS…AETTILWNGN (252 aa)) constitute a GS catalytic domain.

The protein belongs to the glutamine synthetase family. In terms of assembly, homooctamer. As to expression, found mainly in the cortical tissues of seedling roots, and in the root tip.

Its subcellular location is the cytoplasm. It catalyses the reaction L-glutamate + NH4(+) + ATP = L-glutamine + ADP + phosphate + H(+). Functionally, plays a role in the flow of nitrogen into nitrogenous organic compounds. The sequence is that of Glutamine synthetase root isozyme 1 (GLN6) from Zea mays (Maize).